The chain runs to 273 residues: Putative carboxymethylenebutenolidase (273 aa).

Residues Cys130, Asp191, and His223 contribute to the active site.

The protein belongs to the dienelactone hydrolase family.

The catalysed reaction is 2-(5-oxo-2,5-dihydrofuran-2-ylidene)acetate + H2O = 4-oxohex-2-enedioate + H(+). The chain is Putative carboxymethylenebutenolidase from Saccharomyces cerevisiae (strain ATCC 204508 / S288c) (Baker's yeast).